The primary structure comprises 260 residues: tRNA pseudouridine synthase A (260 aa).

Asp-51 functions as the Nucleophile in the catalytic mechanism. Tyr-109 is a substrate binding site.

It belongs to the tRNA pseudouridine synthase TruA family. As to quaternary structure, homodimer.

The enzyme catalyses uridine(38/39/40) in tRNA = pseudouridine(38/39/40) in tRNA. Functionally, formation of pseudouridine at positions 38, 39 and 40 in the anticodon stem and loop of transfer RNAs. The protein is tRNA pseudouridine synthase A of Albidiferax ferrireducens (strain ATCC BAA-621 / DSM 15236 / T118) (Rhodoferax ferrireducens).